The following is a 609-amino-acid chain: Glutamine--fructose-6-phosphate aminotransferase [isomerizing] (609 aa).

Cys2 acts as the Nucleophile; for GATase activity in catalysis. Residues 2-218 (CGIVGAVAQR…EGDVAEVTRR (217 aa)) enclose the Glutamine amidotransferase type-2 domain. 2 consecutive SIS domains span residues 286–426 (AAEF…HNGM) and 458–599 (LAED…VDQP). Lys604 (for Fru-6P isomerization activity) is an active-site residue.

As to quaternary structure, homodimer.

It is found in the cytoplasm. The catalysed reaction is D-fructose 6-phosphate + L-glutamine = D-glucosamine 6-phosphate + L-glutamate. Catalyzes the first step in hexosamine metabolism, converting fructose-6P into glucosamine-6P using glutamine as a nitrogen source. This Shewanella oneidensis (strain ATCC 700550 / JCM 31522 / CIP 106686 / LMG 19005 / NCIMB 14063 / MR-1) protein is Glutamine--fructose-6-phosphate aminotransferase [isomerizing].